Reading from the N-terminus, the 83-residue chain is Snake venom metalloproteinase BnP1 (83 aa).

The Peptidase M12B domain occupies 8–83 (SYIELAVVAD…NPQCIINQPI (76 aa)). 3 residues coordinate Ca(2+): glutamate 11, cysteine 77, and asparagine 80.

The protein belongs to the venom metalloproteinase (M12B) family. P-I subfamily. As to quaternary structure, monomer. Requires Zn(2+) as cofactor. Expressed by the venom gland.

Its subcellular location is the secreted. Its activity is regulated as follows. Inhibited by EDTA. Its function is as follows. This protein is a zinc protease from snake venom that is devoid of significant myotoxic and hemorrhagic activities. It hydrolyzes the Aalpha-chain and more slowly the Bbeta-chain of fibrin and fibrinogen, without affecting the gamma-chains. It induces cell detachment and a apoptosis (anoikis) in endothelial cells. The protein is Snake venom metalloproteinase BnP1 of Bothrops pauloensis (Neuwied's lancehead).